Here is a 523-residue protein sequence, read N- to C-terminus: Effector protein hopAB1 (523 aa).

Disordered regions lie at residues 1 to 94 (MPGI…EAQQ), 165 to 223 (VRQQ…QGLD), and 299 to 320 (RQTT…SGRR). A compositionally biased stretch (basic and acidic residues) spans 18 to 31 (TDGEPVTEREHDSS). Over residues 181-194 (SSSGSSQRSLIGRS) the composition is skewed to low complexity.

Belongs to the HopAB family.

Its subcellular location is the secreted. Its function is as follows. Effector protein that plays different roles depending on the species and plant cultivars that interact with the pathogen. Acts as a virulence determinant by enhancing the development of disease symptoms and bacterial growth. Acts as an avirulence factor by eliciting hypersensitive response (HR) and plant resistance. The polypeptide is Effector protein hopAB1 (hopAB1) (Pseudomonas savastanoi pv. glycinea (Pseudomonas syringae pv. glycinea)).